Consider the following 237-residue polypeptide: Ras-related protein RABA3 (237 aa).

Residue 35-42 (GDSAVGKT) participates in GTP binding. The short motif at 57–65 (SKSTIGVEF) is the Effector region element. GTP contacts are provided by residues 83–87 (DTAGQ), 141–144 (NKAD), and 172–173 (SA). Residues Cys235 and Cys237 are each lipidated (S-geranylgeranyl cysteine). At Cys237 the chain carries Cysteine methyl ester.

Belongs to the small GTPase superfamily. Rab family. Expressed in root tips.

It is found in the endosome membrane. The protein localises to the golgi apparatus. The protein resides in the trans-Golgi network membrane. Intracellular vesicle trafficking and protein transport. The chain is Ras-related protein RABA3 (RABA3) from Arabidopsis thaliana (Mouse-ear cress).